We begin with the raw amino-acid sequence, 520 residues long: Catalase easC (520 aa).

The active site involves histidine 71. Position 361 (tyrosine 361) interacts with heme.

The protein belongs to the catalase family. Heme serves as cofactor.

It participates in alkaloid biosynthesis; ergot alkaloid biosynthesis. Functionally, catalase; part of the gene cluster that mediates the biosynthesis of fumiclavanine C, a fungal ergot alkaloid. DmaW catalyzes the first step of ergot alkaloid biosynthesis by condensing dimethylallyl diphosphate (DMAP) and tryptophan to form 4-dimethylallyl-L-tryptophan. The second step is catalyzed by the methyltransferase easF that methylates 4-dimethylallyl-L-tryptophan in the presence of S-adenosyl-L-methionine, resulting in the formation of 4-dimethylallyl-L-abrine. The catalase easC and the FAD-dependent oxidoreductase easE then transform 4-dimethylallyl-L-abrine to chanoclavine-I which is further oxidized by EasD in the presence of NAD(+), resulting in the formation of chanoclavine-I aldehyde. EasA reduces chanoclavine-I aldehyde to dihydrochanoclavine-I aldehyde that spontaneously dehydrates to form 6,8-dimethyl-6,7-didehydroergoline. EasG then catalyzes the reduction of 6,8-dimethyl-6,7-didehydroergoline to form festuclavine. Hydrolysis of festuclavine by easM then leads to the formation of fumigaclavine B which is in turn acetylated by easN to fumigaclavine A. Finally, easL catalyzes the conversion of fumigaclavine A into fumigaclavine C by attaching a dimethylallyl moiety to C-2 of the indole nucleus. In Aspergillus fumigatus (strain ATCC MYA-4609 / CBS 101355 / FGSC A1100 / Af293) (Neosartorya fumigata), this protein is Catalase easC.